The chain runs to 476 residues: Glycogen synthase (476 aa).

Position 15 (Lys15) interacts with ADP-alpha-D-glucose.

It belongs to the glycosyltransferase 1 family. Bacterial/plant glycogen synthase subfamily.

The catalysed reaction is [(1-&gt;4)-alpha-D-glucosyl](n) + ADP-alpha-D-glucose = [(1-&gt;4)-alpha-D-glucosyl](n+1) + ADP + H(+). The protein operates within glycan biosynthesis; glycogen biosynthesis. Functionally, synthesizes alpha-1,4-glucan chains using ADP-glucose. This Yersinia pseudotuberculosis serotype IB (strain PB1/+) protein is Glycogen synthase.